The chain runs to 385 residues: ELAV-like protein 4 (385 aa).

The interval 12–48 (TMEPQVSNGPTSNTSNGPSSNNRNCPSPMQTGATTDD) is disordered. Positions 18–33 (SNGPTSNTSNGPSSNN) are enriched in low complexity. A compositionally biased stretch (polar residues) spans 34 to 48 (RNCPSPMQTGATTDD). S38 is subject to Phosphoserine. 2 RRM domains span residues 51-129 (TNLI…YARP) and 137-217 (ANLY…FANN). S233 bears the Phosphoserine mark. The residue at position 248 (R248) is an Asymmetric dimethylarginine; by CARM1; alternate. Residue R248 is modified to Omega-N-methylarginine; by CARM1; alternate. The RRM 3 domain occupies 302–380 (WCIFVYNLSP…RVLQVSFKTN (79 aa)).

It belongs to the RRM elav family. Component of a TAU mRNP complex, at least composed of IGF2BP1, ELAVL4 and G3BP. Associates with the EIF4F cap-binding complex, composed of EIF4G, EIF4A, EIF4E and PABP. Within the EIF4F cap-binding complex, interacts with EIF4A. Interacts with SMN (via Tudor domain) in an RNA-independent manner; the interaction is required for localization of ELAVL4 to RNA granules. Interacts with MAP1 light chain LC1 (via C-terminus); the interaction contributes to the association of ELAVL4 with microtubules. Interacts with MAP1 light chain LC2. Post-translationally, methylated by CARM1, which leads to reduced RNA-binding activity and enhanced interaction with SMN. Methylation at Arg-248 by CARM1 weakens protective binding to the 3'UTR of CDKN1A mRNA and down-regulates CDKN1A protein expression, thereby maintaining cells in a proliferative state. Methylation is inhibited by NGF, which facilitates neurite outgrowth. In terms of tissue distribution, expressed in pancreatic beta cells (at protein level). Expressed in the brain.

Its subcellular location is the cytoplasm. It localises to the perikaryon. The protein localises to the cell projection. It is found in the dendrite. The protein resides in the axon. Its subcellular location is the growth cone. RNA-binding protein that is involved in the post-transcriptional regulation of mRNAs. Plays a role in the regulation of mRNA stability, alternative splicing and translation. Binds to AU-rich element (ARE) sequences in the 3' untranslated region (UTR) of target mRNAs, including GAP43, VEGF, FOS, CDKN1A and ACHE mRNA. Many of the target mRNAs are coding for RNA-binding proteins, transcription factors and proteins involved in RNA processing and/or neuronal development and function. By binding to the mRNA 3'UTR, decreases mRNA deadenylation and thereby contributes to the stabilization of mRNA molecules and their protection from decay. Also binds to the polyadenylated (poly(A)) tail in the 3'UTR of mRNA, thereby increasing its affinity for mRNA binding. Mainly plays a role in neuron-specific RNA processing by stabilization of mRNAs such as GAP43, ACHE and mRNAs of other neuronal proteins, thereby contributing to the differentiation of neural progenitor cells, nervous system development, learning and memory mechanisms. Involved in the negative regulation of the proliferative activity of neuronal stem cells and in the positive regulation of neuronal differentiation of neural progenitor cells. Promotes neuronal differentiation of neural stem/progenitor cells in the adult subventricular zone of the hippocampus by binding to and stabilizing SATB1 mRNA. Binds and stabilizes MSI1 mRNA in neural stem cells. Exhibits increased binding to ACHE mRNA during neuronal differentiation, thereby stabilizing ACHE mRNA and enhancing its expression. Protects CDKN1A mRNA from decay by binding to its 3'-UTR. May bind to APP and BACE1 mRNAS and the BACE1AS lncRNA and enhance their stabilization. Plays a role in neurite outgrowth and in the establishment and maturation of dendritic arbors, thereby contributing to neocortical and hippocampal circuitry function. Stabilizes GAP43 mRNA and protects it from decay during postembryonic development in the brain. By promoting the stabilization of GAP43 mRNA, plays a role in NGF-mediated neurite outgrowth. Binds to BDNF long 3'UTR mRNA, thereby leading to its stabilization and increased dendritic translation after activation of PKC. By increasing translation of BDNF after nerve injury, may contribute to nerve regeneration. Acts as a stabilizing factor by binding to the 3'UTR of NOVA1 mRNA, thereby increasing its translation and enhancing its functional activity in neuron-specific splicing. Stimulates translation of mRNA in a poly(A)- and cap-dependent manner, possibly by associating with the EIF4F cap-binding complex. May also negatively regulate translation by binding to the 5'UTR of Ins2 mRNA, thereby repressing its translation. Upon glucose stimulation, Ins2 mRNA is released from ELAVL4 and translational inhibition is abolished. Also plays a role in the regulation of alternative splicing. May regulate alternative splicing of CALCA pre-mRNA into Calcitonin and Calcitonin gene-related peptide 1 (CGRP) by competing with splicing regulator TIAR for binding to U-rich intronic sequences of CALCA pre-mRNA. This chain is ELAV-like protein 4 (ELAVL4), found in Homo sapiens (Human).